The sequence spans 562 residues: Probable malate:quinone oxidoreductase (562 aa).

The protein belongs to the MQO family. FAD serves as cofactor.

The enzyme catalyses (S)-malate + a quinone = a quinol + oxaloacetate. The protein operates within carbohydrate metabolism; tricarboxylic acid cycle; oxaloacetate from (S)-malate (quinone route): step 1/1. In Stenotrophomonas maltophilia (strain K279a), this protein is Probable malate:quinone oxidoreductase.